Reading from the N-terminus, the 631-residue chain is Biotin--protein ligase (631 aa).

In terms of domain architecture, BPL/LPL catalytic spans 341-553; the sequence is ELYAKLINGC…QFDRYHRLLL (213 aa).

This sequence belongs to the biotin--protein ligase family. In terms of assembly, monomer.

The protein localises to the cytoplasm. It catalyses the reaction apo-[methylmalonyl-CoA:pyruvate carboxytransferase] + biotin + ATP = holo-[methylmalonyl-CoA:pyruvate carboxytransferase] + AMP + diphosphate + H(+). The catalysed reaction is apo-[propionyl-CoA:carbon-dioxide ligase (ADP-forming)] + biotin + ATP = holo-[propionyl-CoA:carbon-dioxide ligase (ADP-forming)] + AMP + diphosphate + H(+). The enzyme catalyses apo-[3-methylcrotonoyl-CoA:carbon-dioxide ligase (ADP-forming)] + biotin + ATP = holo-[3-methylcrotonoyl-CoA:carbon-dioxide ligase (ADP-forming)] + AMP + diphosphate + H(+). It carries out the reaction biotin + L-lysyl-[protein] + ATP = N(6)-biotinyl-L-lysyl-[protein] + AMP + diphosphate + H(+). In terms of biological role, post-translational modification of specific protein by attachment of biotin. Acts on various carboxylases such as acetyl-CoA-carboxylase, pyruvate carboxylase, propionyl CoA carboxylase, and 3-methylcrotonyl CoA carboxylase. The polypeptide is Biotin--protein ligase (bpl1) (Schizosaccharomyces pombe (strain 972 / ATCC 24843) (Fission yeast)).